Consider the following 461-residue polypeptide: Bifunctional protein GlmU (461 aa).

The tract at residues methionine 1–arginine 229 is pyrophosphorylase. Residues leucine 8–glycine 11, lysine 22, glutamine 72, and glycine 77–threonine 78 contribute to the UDP-N-acetyl-alpha-D-glucosamine site. Aspartate 102 provides a ligand contact to Mg(2+). Glycine 139, glutamate 154, asparagine 169, and asparagine 227 together coordinate UDP-N-acetyl-alpha-D-glucosamine. Position 227 (asparagine 227) interacts with Mg(2+). Positions isoleucine 230 to asparagine 250 are linker. The interval glycine 251 to glutamate 461 is N-acetyltransferase. Arginine 332 and lysine 350 together coordinate UDP-N-acetyl-alpha-D-glucosamine. Histidine 362 functions as the Proton acceptor in the catalytic mechanism. Tyrosine 365 and asparagine 376 together coordinate UDP-N-acetyl-alpha-D-glucosamine. Acetyl-CoA is bound by residues asparagine 385 to tyrosine 386, alanine 422, and arginine 439.

The protein in the N-terminal section; belongs to the N-acetylglucosamine-1-phosphate uridyltransferase family. It in the C-terminal section; belongs to the transferase hexapeptide repeat family. Homotrimer. Mg(2+) serves as cofactor.

The protein localises to the cytoplasm. It catalyses the reaction alpha-D-glucosamine 1-phosphate + acetyl-CoA = N-acetyl-alpha-D-glucosamine 1-phosphate + CoA + H(+). The catalysed reaction is N-acetyl-alpha-D-glucosamine 1-phosphate + UTP + H(+) = UDP-N-acetyl-alpha-D-glucosamine + diphosphate. The protein operates within nucleotide-sugar biosynthesis; UDP-N-acetyl-alpha-D-glucosamine biosynthesis; N-acetyl-alpha-D-glucosamine 1-phosphate from alpha-D-glucosamine 6-phosphate (route II): step 2/2. It functions in the pathway nucleotide-sugar biosynthesis; UDP-N-acetyl-alpha-D-glucosamine biosynthesis; UDP-N-acetyl-alpha-D-glucosamine from N-acetyl-alpha-D-glucosamine 1-phosphate: step 1/1. Its pathway is bacterial outer membrane biogenesis; LPS lipid A biosynthesis. Catalyzes the last two sequential reactions in the de novo biosynthetic pathway for UDP-N-acetylglucosamine (UDP-GlcNAc). The C-terminal domain catalyzes the transfer of acetyl group from acetyl coenzyme A to glucosamine-1-phosphate (GlcN-1-P) to produce N-acetylglucosamine-1-phosphate (GlcNAc-1-P), which is converted into UDP-GlcNAc by the transfer of uridine 5-monophosphate (from uridine 5-triphosphate), a reaction catalyzed by the N-terminal domain. This is Bifunctional protein GlmU from Lactobacillus johnsonii (strain CNCM I-12250 / La1 / NCC 533).